Consider the following 192-residue polypeptide: Large ribosomal subunit protein bL9 (192 aa).

The tract at residues 172–192 (DALRPEDFFDPEADGVDEDEA) is disordered. Over residues 179-192 (FFDPEADGVDEDEA) the composition is skewed to acidic residues.

It belongs to the bacterial ribosomal protein bL9 family.

Binds to the 23S rRNA. The chain is Large ribosomal subunit protein bL9 from Rhizobium leguminosarum bv. trifolii (strain WSM2304).